Here is a 91-residue protein sequence, read N- to C-terminus: MSFDRSKTPRWRPGYRFQYEPAQKGHVLLYPEGMIKLNDSAALIGGLIDGERDVAAIISELEIQFPGVAELGEDIEQFMEVARAQHWIELA.

The protein belongs to the PqqD family. In terms of assembly, monomer. Interacts with PqqE.

The protein operates within cofactor biosynthesis; pyrroloquinoline quinone biosynthesis. In terms of biological role, functions as a PqqA binding protein and presents PqqA to PqqE, in the pyrroloquinoline quinone (PQQ) biosynthetic pathway. The protein is PqqA binding protein of Pseudomonas fluorescens (strain ATCC BAA-477 / NRRL B-23932 / Pf-5).